A 200-amino-acid polypeptide reads, in one-letter code: 3-isopropylmalate dehydratase small subunit (200 aa).

It belongs to the LeuD family. LeuD type 1 subfamily. In terms of assembly, heterodimer of LeuC and LeuD.

It carries out the reaction (2R,3S)-3-isopropylmalate = (2S)-2-isopropylmalate. It functions in the pathway amino-acid biosynthesis; L-leucine biosynthesis; L-leucine from 3-methyl-2-oxobutanoate: step 2/4. In terms of biological role, catalyzes the isomerization between 2-isopropylmalate and 3-isopropylmalate, via the formation of 2-isopropylmaleate. This is 3-isopropylmalate dehydratase small subunit from Edwardsiella ictaluri (strain 93-146).